The following is a 644-amino-acid chain: 1-deoxy-D-xylulose-5-phosphate synthase (644 aa).

Thiamine diphosphate contacts are provided by residues histidine 78 and 120–122 (GHA). Aspartate 149 contacts Mg(2+). Residues 150–151 (AA), asparagine 178, and glutamate 373 each bind thiamine diphosphate. Asparagine 178 is a Mg(2+) binding site.

Belongs to the transketolase family. DXPS subfamily. Homodimer. Mg(2+) is required as a cofactor. Requires thiamine diphosphate as cofactor.

The enzyme catalyses D-glyceraldehyde 3-phosphate + pyruvate + H(+) = 1-deoxy-D-xylulose 5-phosphate + CO2. Its pathway is metabolic intermediate biosynthesis; 1-deoxy-D-xylulose 5-phosphate biosynthesis; 1-deoxy-D-xylulose 5-phosphate from D-glyceraldehyde 3-phosphate and pyruvate: step 1/1. Its function is as follows. Catalyzes the acyloin condensation reaction between C atoms 2 and 3 of pyruvate and glyceraldehyde 3-phosphate to yield 1-deoxy-D-xylulose-5-phosphate (DXP). The chain is 1-deoxy-D-xylulose-5-phosphate synthase from Chlamydia felis (strain Fe/C-56) (Chlamydophila felis).